Reading from the N-terminus, the 303-residue chain is Sulfate adenylyltransferase subunit 2 (303 aa).

It belongs to the PAPS reductase family. CysD subfamily. Heterodimer composed of CysD, the smaller subunit, and CysN.

The catalysed reaction is sulfate + ATP + H(+) = adenosine 5'-phosphosulfate + diphosphate. It functions in the pathway sulfur metabolism; hydrogen sulfide biosynthesis; sulfite from sulfate: step 1/3. Its function is as follows. With CysN forms the ATP sulfurylase (ATPS) that catalyzes the adenylation of sulfate producing adenosine 5'-phosphosulfate (APS) and diphosphate, the first enzymatic step in sulfur assimilation pathway. APS synthesis involves the formation of a high-energy phosphoric-sulfuric acid anhydride bond driven by GTP hydrolysis by CysN coupled to ATP hydrolysis by CysD. This is Sulfate adenylyltransferase subunit 2 from Aliarcobacter butzleri (strain RM4018) (Arcobacter butzleri).